The following is a 103-amino-acid chain: Pyrimidine/purine nucleoside phosphorylase (103 aa).

Belongs to the nucleoside phosphorylase PpnP family.

The catalysed reaction is a purine D-ribonucleoside + phosphate = a purine nucleobase + alpha-D-ribose 1-phosphate. It catalyses the reaction adenosine + phosphate = alpha-D-ribose 1-phosphate + adenine. It carries out the reaction cytidine + phosphate = cytosine + alpha-D-ribose 1-phosphate. The enzyme catalyses guanosine + phosphate = alpha-D-ribose 1-phosphate + guanine. The catalysed reaction is inosine + phosphate = alpha-D-ribose 1-phosphate + hypoxanthine. It catalyses the reaction thymidine + phosphate = 2-deoxy-alpha-D-ribose 1-phosphate + thymine. It carries out the reaction uridine + phosphate = alpha-D-ribose 1-phosphate + uracil. The enzyme catalyses xanthosine + phosphate = alpha-D-ribose 1-phosphate + xanthine. Catalyzes the phosphorolysis of diverse nucleosides, yielding D-ribose 1-phosphate and the respective free bases. Can use uridine, adenosine, guanosine, cytidine, thymidine, inosine and xanthosine as substrates. Also catalyzes the reverse reactions. The polypeptide is Pyrimidine/purine nucleoside phosphorylase (Citrifermentans bemidjiense (strain ATCC BAA-1014 / DSM 16622 / JCM 12645 / Bem) (Geobacter bemidjiensis)).